Consider the following 316-residue polypeptide: Ecto-ADP-ribosyltransferase 5 (316 aa).

An N-terminal signal peptide occupies residues 1–23 (MIQATLLISLSCLSFYTLGSGVR). Cys50 and Cys266 are oxidised to a cystine. Asn68 carries N-linked (GlcNAc...) asparagine glycosylation. Residues 70–261 (TRLRESWETA…MTLSSSDQMC (192 aa)) enclose the TR mART core domain. An NAD(+)-binding site is contributed by Tyr107. Asn109 carries an N-linked (GlcNAc...) asparagine glycan. NAD(+) contacts are provided by Arg168 and Gln188. Residue Arg168 is part of the active site. Ser191 is a catalytic residue. An NAD(+)-binding site is contributed by Ser222. The active site involves Glu229. N-linked (GlcNAc...) asparagine glycans are attached at residues Asn242 and Asn248.

Belongs to the Arg-specific ADP-ribosyltransferase family.

It is found in the secreted. The protein resides in the membrane. The enzyme catalyses L-arginyl-[protein] + NAD(+) = N(omega)-(ADP-D-ribosyl)-L-arginyl-[protein] + nicotinamide + H(+). This is Ecto-ADP-ribosyltransferase 5 (ART5) from Bos taurus (Bovine).